Consider the following 634-residue polypeptide: Kinesin-like protein KIF22 (634 aa).

Residues 19–345 (RVRVAVRLRP…LNFAAKSKQI (327 aa)) enclose the Kinesin motor domain. 103 to 110 (GPTGAGKT) is an ATP binding site. Positions 357 to 406 (APTIAPGKRTREEQEAGGSGEPQNKRSKEGKKAEHSPSPPLHPQSSPDSS) are disordered. Over residues 379-391 (QNKRSKEGKKAEH) the composition is skewed to basic and acidic residues. Residues 421-471 (SAERERLNLLKTVAQSRKEIQMLKEKQKELEDKANMFNKQKETTEKESKDA) are a coiled coil.

The protein belongs to the TRAFAC class myosin-kinesin ATPase superfamily. Kinesin family. Post-translationally, ubiquitinated, leading to its subsequent proteasomal degradation.

The protein resides in the nucleus. It localises to the cytoplasm. It is found in the cytoskeleton. Functionally, kinesin family member that is involved in spindle formation and the movements of chromosomes during mitosis and meiosis. Binds to microtubules and to DNA. The polypeptide is Kinesin-like protein KIF22 (kif22) (Danio rerio (Zebrafish)).